The chain runs to 381 residues: MYIHYLKDLIGFKSVTPENDGAIEYIDDLLKQHGFKTEIKIFGDFKSEQVTNLYAIFGRNEPNICFVGHVDVVPVDNHALWHNSSPFKASKQDGKIYGRGAVDMKGAIACFLAASLDFIKNNAGFKGSISFLLTSDEEGKAKHGTKEMLQYIYDQGYKVDFAIVGEPTCEKEIGDTIKIGRRGSVNFKLNIDGLAGHVAYPHKANNPLPCLIKILHELTNIRLDEGTEFFQNSNLEVTNIDVGNETSNVIPASTEASFNIRFNNLHSAETLAKQVEEIIKRYCKEYKVDYKLEYSSFAGSFIQNPSAKIKEFAKVVEHTLKIKPKFSTSGGTSDARFVKNYCPLVEFGLLSETAHKINEYTKISDLQKLYDVYYNFLIKIL.

Position 69 (His69) interacts with Zn(2+). The active site involves Asp71. Asp103 lines the Zn(2+) pocket. The active-site Proton acceptor is the Glu137. Residues Glu138, Glu166, and His355 each contribute to the Zn(2+) site.

This sequence belongs to the peptidase M20A family. DapE subfamily. Homodimer. Zn(2+) is required as a cofactor. It depends on Co(2+) as a cofactor.

The enzyme catalyses N-succinyl-(2S,6S)-2,6-diaminopimelate + H2O = (2S,6S)-2,6-diaminopimelate + succinate. It functions in the pathway amino-acid biosynthesis; L-lysine biosynthesis via DAP pathway; LL-2,6-diaminopimelate from (S)-tetrahydrodipicolinate (succinylase route): step 3/3. Its function is as follows. Catalyzes the hydrolysis of N-succinyl-L,L-diaminopimelic acid (SDAP), forming succinate and LL-2,6-diaminopimelate (DAP), an intermediate involved in the bacterial biosynthesis of lysine and meso-diaminopimelic acid, an essential component of bacterial cell walls. The polypeptide is Succinyl-diaminopimelate desuccinylase (Rickettsia akari (strain Hartford)).